We begin with the raw amino-acid sequence, 348 residues long: GMP reductase 2 (348 aa).

NADP(+)-binding positions include 26-27 (SR), lysine 78, 129-131 (DVA), and 180-181 (IG). K(+) is bound by residues glycine 181, glycine 183, and cysteine 186. The active-site Thioimidate intermediate is cysteine 186. Threonine 188 serves as the catalytic Proton donor/acceptor. Arginine 189 contacts K(+). GMP-binding positions include 219 to 221 (DGG), 242 to 243 (GG), 268 to 270 (GMS), and 286 to 290 (RASEG). Residues methionine 269 and 285-286 (YR) contribute to the NADP(+) site. Lysine 291 carries the N6-acetyllysine modification. 314-317 (STCT) contributes to the NADP(+) binding site.

It belongs to the IMPDH/GMPR family. GuaC type 1 subfamily. In terms of assembly, homotetramer.

It catalyses the reaction IMP + NH4(+) + NADP(+) = GMP + NADPH + 2 H(+). Its function is as follows. Catalyzes the irreversible NADPH-dependent deamination of GMP to IMP. It functions in the conversion of nucleobase, nucleoside and nucleotide derivatives of G to A nucleotides, and in maintaining the intracellular balance of A and G nucleotides. Plays a role in modulating cellular differentiation. The polypeptide is GMP reductase 2 (Bos taurus (Bovine)).